Reading from the N-terminus, the 393-residue chain is Probable protein phosphatase 2C 72 (393 aa).

Residues 49-357 (EFSMAVVQAN…DDITVVVVFF (309 aa)) form the PPM-type phosphatase domain. The Mn(2+) site is built by aspartate 88 and glycine 89. The chain crosses the membrane as a helical span at residues 147–167 (LAAVGSCCLVGVICAGNLYIA). The Mn(2+) site is built by aspartate 289 and aspartate 348.

This sequence belongs to the PP2C family. The cofactor is Mg(2+). Requires Mn(2+) as cofactor.

The protein resides in the membrane. The catalysed reaction is O-phospho-L-seryl-[protein] + H2O = L-seryl-[protein] + phosphate. It catalyses the reaction O-phospho-L-threonyl-[protein] + H2O = L-threonyl-[protein] + phosphate. The protein is Probable protein phosphatase 2C 72 of Oryza sativa subsp. japonica (Rice).